The following is a 177-amino-acid chain: Endoribonuclease YbeY (177 aa).

3 residues coordinate Zn(2+): histidine 118, histidine 122, and histidine 128.

The protein belongs to the endoribonuclease YbeY family. Zn(2+) is required as a cofactor.

The protein localises to the cytoplasm. Its function is as follows. Single strand-specific metallo-endoribonuclease involved in late-stage 70S ribosome quality control and in maturation of the 3' terminus of the 16S rRNA. The polypeptide is Endoribonuclease YbeY (Mycolicibacterium paratuberculosis (strain ATCC BAA-968 / K-10) (Mycobacterium paratuberculosis)).